Here is a 147-residue protein sequence, read N- to C-terminus: NADH-quinone oxidoreductase subunit A (147 aa).

3 helical membrane passes run 16–36 (FAIFLIVAIGLCCLMLVGGWF), 68–88 (FYLVAMFFVIFDVEALYLFAW), and 98–118 (VGFVEAAIFIFVLLAGLVYLV).

Belongs to the complex I subunit 3 family. NDH-1 is composed of 13 different subunits. Subunits NuoA, H, J, K, L, M, N constitute the membrane sector of the complex.

Its subcellular location is the cell inner membrane. It catalyses the reaction a quinone + NADH + 5 H(+)(in) = a quinol + NAD(+) + 4 H(+)(out). Functionally, NDH-1 shuttles electrons from NADH, via FMN and iron-sulfur (Fe-S) centers, to quinones in the respiratory chain. The immediate electron acceptor for the enzyme in this species is believed to be ubiquinone. Couples the redox reaction to proton translocation (for every two electrons transferred, four hydrogen ions are translocated across the cytoplasmic membrane), and thus conserves the redox energy in a proton gradient. The protein is NADH-quinone oxidoreductase subunit A of Shigella boydii serotype 18 (strain CDC 3083-94 / BS512).